We begin with the raw amino-acid sequence, 226 residues long: Glycerol-3-phosphate acyltransferase (226 aa).

A run of 6 helical transmembrane segments spans residues 1–21 (MGLWLSLCGAVVVVAYLLGSF), 56–76 (GPGAFVLGLDCLKGVLAIALV), 102–122 (LVTLAGIAAILGHSKSIFLGF), 134–154 (ILLAMNWQVGLATFGVFAVVV), 159–178 (IVSLSSIMGAIAVSIVMVVL), and 182–197 (LPYILFGIAGGLYVIL).

It belongs to the PlsY family. Probably interacts with PlsX.

It localises to the cell inner membrane. It catalyses the reaction an acyl phosphate + sn-glycerol 3-phosphate = a 1-acyl-sn-glycero-3-phosphate + phosphate. Its pathway is lipid metabolism; phospholipid metabolism. Functionally, catalyzes the transfer of an acyl group from acyl-phosphate (acyl-PO(4)) to glycerol-3-phosphate (G3P) to form lysophosphatidic acid (LPA). This enzyme utilizes acyl-phosphate as fatty acyl donor, but not acyl-CoA or acyl-ACP. This Trichormus variabilis (strain ATCC 29413 / PCC 7937) (Anabaena variabilis) protein is Glycerol-3-phosphate acyltransferase.